We begin with the raw amino-acid sequence, 140 residues long: PDZ domain-containing protein 11 (140 aa).

The PDZ domain maps to 47–129; sequence IVTLKKPPGA…ISMRVRFFPY (83 aa).

In terms of assembly, interacts with ATP2B1, ATP2B2, ATP2B3, ATP2B4 and ATP7A. Interacts with PLEKHA7 (via WW domains) at zonula adherens; this interaction is essential for the interaction between PLEKHA7 and the ADAM10-binding protein TSPAN33. Interacts with SLC5A6.

Its subcellular location is the cytoplasm. It is found in the cell junction. The protein resides in the adherens junction. The protein localises to the cell membrane. In terms of biological role, mediates docking of ADAM10 to zonula adherens by interacting with PLEKHA7 which is required for PLEKHA7 to interact with the ADAM10-binding protein TSPAN33. The sequence is that of PDZ domain-containing protein 11 (PDZD11) from Bos taurus (Bovine).